Reading from the N-terminus, the 363-residue chain is Peptide chain release factor 1 (363 aa).

An N5-methylglutamine modification is found at Gln237. Residues Glu287–Leu299 show a composition bias toward basic and acidic residues. The interval Glu287–Ser306 is disordered.

The protein belongs to the prokaryotic/mitochondrial release factor family. Post-translationally, methylated by PrmC. Methylation increases the termination efficiency of RF1.

It localises to the cytoplasm. Its function is as follows. Peptide chain release factor 1 directs the termination of translation in response to the peptide chain termination codons UAG and UAA. The chain is Peptide chain release factor 1 from Ruthia magnifica subsp. Calyptogena magnifica.